The chain runs to 420 residues: Transcription factor IIIB 50 kDa subunit (420 aa).

A TFIIB-type zinc finger spans residues 3-36 (NGSRCPDCGSSELVEDSHYSQSQLVCSDCGCVVT). Residues C7, C10, C28, and C31 each contribute to the Zn(2+) site. A run of 2 repeats spans residues 72-157 (DLRR…MQMV) and 173-249 (VKSY…SLAQ). The interaction with target DNA stretch occupies residues 108–114 (AARLQKK). The tract at residues 316–387 (TAEVETQQQQ…AVTGDEDISD (72 aa)) is disordered. Residues 322–336 (QQQQQQQQGQGQGQQ) are compositionally biased toward low complexity. S354 carries the phosphoserine modification. The required for the formation of a ternary complex with DNA and TBP; not required for interaction with TBP in the absence of DNA stretch occupies residues 358–364 (LLPPCML). C362 is subject to Cysteine sulfenic acid (-SOH). A required for interaction with TBP and formation of a ternary complex with DNA and TBP region spans residues 366–420 (PPKRTHTLPPESAVTGDEDISDSEIEQYLRTPQEVRDFERAQAASQAAMRVPNPP).

Belongs to the TFIIB family. As to quaternary structure, component of TFIIIB complexes. The TFIIIB complex has two activities, alpha and beta. The TFIIIB-alpha activity complex is composed of TBP, BDP1, and a complex containing both BRF2 and at least four stably associated proteins; this complex inhibits the transcription by pol III via its phosphorylation by CK2; YY1 facilitates the TFIIIB-alpha complex formation. Interacts with TBP; this interaction promotes recruitment of BRF2 to TATA box-containing promoters. Interacts with TBP and the BURE sequence (GC-rich sequence downstream from the TATA box) to form a strong ternary complex which is joined by BDP1; this ternary complex stimulates pol III transcription. Forms a trimeric complex composed of TBP, BRF2 and mini-SNAPc complex (SNAP43, SNAP50, and the N-terminal third of SNAP190) on the promoter. Assembly of the TBP-BRF2 complex is stimulated by SNAP190. Interacts with MAF1 and SNAPC4. In terms of processing, in response to oxidative stress, Cys-362 is reversibly oxidized to cysteine sulfenic acid. Oxidation of Cys-362 impairs formation of a ternary complex with TBP and DNA and down-regulates expression of target genes in response to oxidative stress.

Its subcellular location is the nucleus. General activator of RNA polymerase III transcription. Factor exclusively required for RNA polymerase III transcription of genes with promoter elements upstream of the initiation sites. Contributes to the regulation of gene expression; functions as activator in the absence of oxidative stress. Down-regulates expression of target genes in response to oxidative stress. Overexpression protects cells against apoptosis in response to oxidative stress. The sequence is that of Transcription factor IIIB 50 kDa subunit (Brf2) from Mus musculus (Mouse).